A 568-amino-acid chain; its full sequence is 2-succinyl-5-enolpyruvyl-6-hydroxy-3-cyclohexene-1-carboxylate synthase (568 aa).

It belongs to the TPP enzyme family. MenD subfamily. In terms of assembly, homodimer. Requires Mg(2+) as cofactor. Mn(2+) is required as a cofactor. The cofactor is thiamine diphosphate.

It carries out the reaction isochorismate + 2-oxoglutarate + H(+) = 5-enolpyruvoyl-6-hydroxy-2-succinyl-cyclohex-3-ene-1-carboxylate + CO2. Its pathway is quinol/quinone metabolism; 1,4-dihydroxy-2-naphthoate biosynthesis; 1,4-dihydroxy-2-naphthoate from chorismate: step 2/7. The protein operates within quinol/quinone metabolism; menaquinone biosynthesis. Its function is as follows. Catalyzes the thiamine diphosphate-dependent decarboxylation of 2-oxoglutarate and the subsequent addition of the resulting succinic semialdehyde-thiamine pyrophosphate anion to isochorismate to yield 2-succinyl-5-enolpyruvyl-6-hydroxy-3-cyclohexene-1-carboxylate (SEPHCHC). The polypeptide is 2-succinyl-5-enolpyruvyl-6-hydroxy-3-cyclohexene-1-carboxylate synthase (Actinobacillus pleuropneumoniae serotype 3 (strain JL03)).